The chain runs to 315 residues: Glycerol-3-phosphate dehydrogenase [NAD(P)+] (315 aa).

NADPH is bound by residues tryptophan 24, arginine 44, arginine 45, and lysine 92. The sn-glycerol 3-phosphate site is built by lysine 92 and glycine 120. Position 124 (serine 124) interacts with NADPH. Residues lysine 175, aspartate 228, serine 238, arginine 239, and asparagine 240 each coordinate sn-glycerol 3-phosphate. Lysine 175 functions as the Proton acceptor in the catalytic mechanism. Residue arginine 239 coordinates NADPH. Position 265 (glutamate 265) interacts with NADPH.

The protein belongs to the NAD-dependent glycerol-3-phosphate dehydrogenase family.

It localises to the cytoplasm. It carries out the reaction sn-glycerol 3-phosphate + NAD(+) = dihydroxyacetone phosphate + NADH + H(+). The enzyme catalyses sn-glycerol 3-phosphate + NADP(+) = dihydroxyacetone phosphate + NADPH + H(+). It participates in membrane lipid metabolism; glycerophospholipid metabolism. In terms of biological role, catalyzes the reduction of the glycolytic intermediate dihydroxyacetone phosphate (DHAP) to sn-glycerol 3-phosphate (G3P), the key precursor for phospholipid synthesis. This Synechococcus sp. (strain JA-2-3B'a(2-13)) (Cyanobacteria bacterium Yellowstone B-Prime) protein is Glycerol-3-phosphate dehydrogenase [NAD(P)+].